Here is a 136-residue protein sequence, read N- to C-terminus: uncharacterized protein (136 aa).

Disordered stretches follow at residues Gln-23–Asn-44 and Asp-56–Arg-95. Positions Ser-61–Glu-79 are enriched in low complexity. Residues Glu-80–Glu-91 are compositionally biased toward acidic residues.

This is an uncharacterized protein from Saccharomyces cerevisiae (strain ATCC 204508 / S288c) (Baker's yeast).